Consider the following 255-residue polypeptide: Acetylglutamate kinase (255 aa).

Residues 40–41 (GG), Arg62, and Asn153 each bind substrate.

Belongs to the acetylglutamate kinase family. ArgB subfamily.

It localises to the cytoplasm. It catalyses the reaction N-acetyl-L-glutamate + ATP = N-acetyl-L-glutamyl 5-phosphate + ADP. It functions in the pathway amino-acid biosynthesis; L-arginine biosynthesis; N(2)-acetyl-L-ornithine from L-glutamate: step 2/4. Its function is as follows. Catalyzes the ATP-dependent phosphorylation of N-acetyl-L-glutamate. In Bacillus cereus (strain G9842), this protein is Acetylglutamate kinase.